Reading from the N-terminus, the 390-residue chain is Multidrug resistance protein MdtL (390 aa).

A run of 12 helical transmembrane segments spans residues 4-24 (FLICSFALVLLYPAGIDMYLV), 42-62 (IAFSVYLAGMATAMLFAGKVA), 69-89 (PVAIAGAVIFIIASMLCSRAT), 93-113 (LFLTGRFIQGIGAGCCYVVAF), 131-151 (LLNGITCIVPVLAPVLGHLIM), 158-178 (SLFYTMIAMGIAVCLLSVFIL), 199-221 (LLNRFFLSRLAITTLSVSVILTF), 245-265 (ALTAGISMAVSFSTPFALSVF), 269-289 (TLMLTSQGLFLAAGIVLSLSS), 293-313 (VTLFGLTLICAGFSVGFGVAM), 316-336 (ALGPFSLRAGVASSVLGIAQV), and 353-375 (ALNMLIGILIGCSMVCILLLMTI).

Belongs to the major facilitator superfamily. DHA1 family. MdtL (TC 2.A.1.2.22) subfamily.

Its subcellular location is the cell inner membrane. In Citrobacter koseri (strain ATCC BAA-895 / CDC 4225-83 / SGSC4696), this protein is Multidrug resistance protein MdtL.